We begin with the raw amino-acid sequence, 499 residues long: Aspartyl/glutamyl-tRNA(Asn/Gln) amidotransferase subunit B (499 aa).

It belongs to the GatB/GatE family. GatB subfamily. Heterotrimer of A, B and C subunits.

It catalyses the reaction L-glutamyl-tRNA(Gln) + L-glutamine + ATP + H2O = L-glutaminyl-tRNA(Gln) + L-glutamate + ADP + phosphate + H(+). The enzyme catalyses L-aspartyl-tRNA(Asn) + L-glutamine + ATP + H2O = L-asparaginyl-tRNA(Asn) + L-glutamate + ADP + phosphate + 2 H(+). Allows the formation of correctly charged Asn-tRNA(Asn) or Gln-tRNA(Gln) through the transamidation of misacylated Asp-tRNA(Asn) or Glu-tRNA(Gln) in organisms which lack either or both of asparaginyl-tRNA or glutaminyl-tRNA synthetases. The reaction takes place in the presence of glutamine and ATP through an activated phospho-Asp-tRNA(Asn) or phospho-Glu-tRNA(Gln). This is Aspartyl/glutamyl-tRNA(Asn/Gln) amidotransferase subunit B from Bartonella tribocorum (strain CIP 105476 / IBS 506).